Here is an 87-residue protein sequence, read N- to C-terminus: Transcriptional regulator PINT87aa (87 aa).

Interacts with PAF1 complex member PAF1. Interacts with transcription factor FOXM1. As to expression, expressed in brain, liver, kidney and stomach with lower levels in breast, intestine, thyroid and pancreas.

It localises to the nucleus. In terms of biological role, enhances the binding of the PAF1 complex to target gene promoters and plays a role in negative regulation of transcription. May function as an anchor to keep the PAF1 complex on target gene promoters, sequentially pausing RNA polymerase II-induced mRNA elongation. Inhibits FOXM1-mediated transcription of PHB2. The polypeptide is Transcriptional regulator PINT87aa (Homo sapiens (Human)).